A 68-amino-acid polypeptide reads, in one-letter code: Alpha-conotoxin-like Ca1.2 (68 aa).

The signal sequence occupies residues 1–21 (MGMRMMFTVFLLVVLATTVVS). A propeptide spanning residues 22–48 (FTSDRASEGRNAAAKDKASDLVALTVR) is cleaved from the precursor. Intrachain disulfides connect Cys-50/Cys-56 and Cys-51/Cys-64. The lacks the Ser-Xaa-Pro motif that is crucial for potent interaction with nAChR stretch occupies residues 52–54 (AIR). Tyr-63 carries the sulfotyrosine modification. Cys-64 bears the Cysteine amide mark. A propeptide spanning residues 65–68 (GGIY) is cleaved from the precursor.

Belongs to the conotoxin A superfamily. In terms of tissue distribution, expressed by the venom duct.

The protein localises to the secreted. Functionally, alpha-conotoxins act on postsynaptic membranes, they bind to the nicotinic acetylcholine receptors (nAChR) and thus inhibit them. Has possibly a distinct nAChR binding mode from other alpha-conotoxins, due to a different three residue motif (lacks the Ser-Xaa-Pro motif). The sequence is that of Alpha-conotoxin-like Ca1.2 from Conus caracteristicus (Characteristic cone).